The primary structure comprises 146 residues: Small ribosomal subunit protein uS5 (146 aa).

An S5 DRBM domain is found at Phe-8–Val-71.

This sequence belongs to the universal ribosomal protein uS5 family. In terms of assembly, part of the 30S ribosomal subunit. Contacts proteins S4 and S8.

Functionally, with S4 and S12 plays an important role in translational accuracy. In terms of biological role, located at the back of the 30S subunit body where it stabilizes the conformation of the head with respect to the body. The polypeptide is Small ribosomal subunit protein uS5 (Wolinella succinogenes (strain ATCC 29543 / DSM 1740 / CCUG 13145 / JCM 31913 / LMG 7466 / NCTC 11488 / FDC 602W) (Vibrio succinogenes)).